The primary structure comprises 370 residues: Putative agmatine deiminase (370 aa).

The span at 1-19 (MTNMNVDATQLTTKPSQDG) shows a compositional bias: polar residues. The segment at 1-20 (MTNMNVDATQLTTKPSQDGF) is disordered. The active-site Amidino-cysteine intermediate is C361.

It belongs to the agmatine deiminase family.

It catalyses the reaction agmatine + H2O = N-carbamoylputrescine + NH4(+). The sequence is that of Putative agmatine deiminase from Shewanella frigidimarina (strain NCIMB 400).